Reading from the N-terminus, the 359-residue chain is Zinc finger CCCH domain-containing protein 20 (359 aa).

3 C3H1-type zinc fingers span residues 75-107, 119-145, and 153-177; these read TCDHFRMYEFKVRRCARGRSHDWTECPYAHPGE, YSGTACPEFRKGCCKRGDACEFSHGVF, and RYRTQPCKDGGNCRRRVCFFAHSPD. Disordered regions lie at residues 207 to 226 and 334 to 359; these read SISPSSNSPPVSPRGDSDSS and MGRIEPDPDQGAGDTPDVGWVSDLVM.

This is Zinc finger CCCH domain-containing protein 20 from Arabidopsis thaliana (Mouse-ear cress).